The chain runs to 171 residues: uncharacterized protein (171 aa).

2 consecutive transmembrane segments (helical) span residues 13–35 (VGASLKVPAIAAGAAFFLSIATA) and 50–72 (ATVLALGAGVTAYALRALLAYVV).

It localises to the cell membrane. This is an uncharacterized protein from Treponema pallidum (strain Nichols).